We begin with the raw amino-acid sequence, 342 residues long: UDP-N-acetylglucosamine--N-acetylmuramyl-(pentapeptide) pyrophosphoryl-undecaprenol N-acetylglucosamine transferase (342 aa).

Residues 10-12, asparagine 124, serine 177, and glutamine 275 contribute to the UDP-N-acetyl-alpha-D-glucosamine site; that span reads TGG.

Belongs to the glycosyltransferase 28 family. MurG subfamily.

It is found in the cell inner membrane. The enzyme catalyses di-trans,octa-cis-undecaprenyl diphospho-N-acetyl-alpha-D-muramoyl-L-alanyl-D-glutamyl-meso-2,6-diaminopimeloyl-D-alanyl-D-alanine + UDP-N-acetyl-alpha-D-glucosamine = di-trans,octa-cis-undecaprenyl diphospho-[N-acetyl-alpha-D-glucosaminyl-(1-&gt;4)]-N-acetyl-alpha-D-muramoyl-L-alanyl-D-glutamyl-meso-2,6-diaminopimeloyl-D-alanyl-D-alanine + UDP + H(+). Its pathway is cell wall biogenesis; peptidoglycan biosynthesis. Its function is as follows. Cell wall formation. Catalyzes the transfer of a GlcNAc subunit on undecaprenyl-pyrophosphoryl-MurNAc-pentapeptide (lipid intermediate I) to form undecaprenyl-pyrophosphoryl-MurNAc-(pentapeptide)GlcNAc (lipid intermediate II). The chain is UDP-N-acetylglucosamine--N-acetylmuramyl-(pentapeptide) pyrophosphoryl-undecaprenol N-acetylglucosamine transferase from Campylobacter jejuni (strain RM1221).